The primary structure comprises 65 residues: Sec-independent protein translocase protein TatA (65 aa).

Residues 1–21 traverse the membrane as a helical segment; the sequence is MFGLGGQELVLILLIILLLFG.

Belongs to the TatA/E family. Forms a complex with TatC.

It is found in the cell inner membrane. Its function is as follows. Part of the twin-arginine translocation (Tat) system that transports large folded proteins containing a characteristic twin-arginine motif in their signal peptide across membranes. TatA could form the protein-conducting channel of the Tat system. The protein is Sec-independent protein translocase protein TatA of Chlorobium phaeobacteroides (strain DSM 266 / SMG 266 / 2430).